Here is a 618-residue protein sequence, read N- to C-terminus: Uptake hydrogenase large subunit (618 aa).

Ni(2+)-binding residues include cysteine 75, cysteine 78, cysteine 597, and cysteine 600.

The protein belongs to the [NiFe]/[NiFeSe] hydrogenase large subunit family. As to quaternary structure, heterodimer of a large and a small subunit. The cofactor is Ni(2+).

The protein localises to the cell membrane. It catalyses the reaction H2 + A = AH2. In terms of biological role, this enzyme recycles the H(2) produced by nitrogenase to increase the production of ATP and to protect nitrogenase against inhibition or damage by O(2) under carbon- or phosphate-limited conditions. The sequence is that of Uptake hydrogenase large subunit (hupB) from Rubrivivax gelatinosus (Rhodocyclus gelatinosus).